Here is a 259-residue protein sequence, read N- to C-terminus: Triosephosphate isomerase (259 aa).

Substrate is bound at residue 10 to 12 (NWK). Catalysis depends on histidine 102, which acts as the Electrophile. Glutamate 172 functions as the Proton acceptor in the catalytic mechanism. Substrate is bound by residues glycine 178, serine 218, and 239-240 (GG).

Belongs to the triosephosphate isomerase family. In terms of assembly, homodimer.

Its subcellular location is the cytoplasm. The catalysed reaction is D-glyceraldehyde 3-phosphate = dihydroxyacetone phosphate. The protein operates within carbohydrate biosynthesis; gluconeogenesis. It functions in the pathway carbohydrate degradation; glycolysis; D-glyceraldehyde 3-phosphate from glycerone phosphate: step 1/1. Functionally, involved in the gluconeogenesis. Catalyzes stereospecifically the conversion of dihydroxyacetone phosphate (DHAP) to D-glyceraldehyde-3-phosphate (G3P). This is Triosephosphate isomerase from Leifsonia xyli subsp. xyli (strain CTCB07).